The following is a 782-amino-acid chain: Isoamylase 3, chloroplastic (782 aa).

The N-terminal 68 residues, 1–68 (MDSIGINRAP…EKVRRFDSVR (68 aa)), are a transit peptide targeting the chloroplast. Polar residues predominate over residues 68–81 (RSTTARAQNGNAGR). The tract at residues 68-88 (RSTTARAQNGNAGRSMTEERG) is disordered. The Nucleophile role is filled by Asp-445. Glu-482 (proton donor) is an active-site residue.

Belongs to the glycosyl hydrolase 13 family. Expressed in leaves. Expressed at low levels in developing endosperm.

It localises to the plastid. It is found in the chloroplast. Its subcellular location is the amyloplast. The enzyme catalyses Hydrolysis of (1-&gt;6)-alpha-D-glucosidic branch linkages in glycogen, amylopectin and their beta-limit dextrins.. Starch-debranching enzyme that plays a role in the degradation of transitory starch during the night in leaf blades, facilitates the formation of spherical amyloplasts containing compound granules in the endosperm, and affects morphological characteristics of plastids. This Oryza sativa subsp. japonica (Rice) protein is Isoamylase 3, chloroplastic.